We begin with the raw amino-acid sequence, 593 residues long: Aspartate--tRNA ligase (593 aa).

Glu173 is a binding site for L-aspartate. Residues Gln197–Lys200 are aspartate. Arg219 is an L-aspartate binding site. Residues Arg219–Glu221 and Gln228 each bind ATP. His448 lines the L-aspartate pocket. Glu482 lines the ATP pocket. Arg489 is a binding site for L-aspartate. Gly534–Arg537 lines the ATP pocket.

Belongs to the class-II aminoacyl-tRNA synthetase family. Type 1 subfamily. In terms of assembly, homodimer.

The protein resides in the cytoplasm. It carries out the reaction tRNA(Asp) + L-aspartate + ATP = L-aspartyl-tRNA(Asp) + AMP + diphosphate. In terms of biological role, catalyzes the attachment of L-aspartate to tRNA(Asp) in a two-step reaction: L-aspartate is first activated by ATP to form Asp-AMP and then transferred to the acceptor end of tRNA(Asp). This Shewanella denitrificans (strain OS217 / ATCC BAA-1090 / DSM 15013) protein is Aspartate--tRNA ligase.